Consider the following 28-residue polypeptide: uncharacterized protein (28 aa).

This is an uncharacterized protein from Spiroplasma virus 4 (SpV4).